A 362-amino-acid chain; its full sequence is Phosphatidylserine decarboxylase proenzyme (362 aa).

A helical transmembrane segment spans residues 26–44; it reads YLLTGVTILSFIFMFQYKY. Residues aspartate 147, histidine 206, and serine 316 each act as charge relay system; for autoendoproteolytic cleavage activity in the active site. Residue serine 316 is the Schiff-base intermediate with substrate; via pyruvic acid; for decarboxylase activity of the active site. Residue serine 316 is modified to Pyruvic acid (Ser); by autocatalysis.

The protein belongs to the phosphatidylserine decarboxylase family. PSD-B subfamily. Eukaryotic type I sub-subfamily. In terms of assembly, heterodimer of a large membrane-associated beta subunit and a small pyruvoyl-containing alpha subunit. It depends on pyruvate as a cofactor. Is synthesized initially as an inactive proenzyme. Formation of the active enzyme involves a self-maturation process in which the active site pyruvoyl group is generated from an internal serine residue via an autocatalytic post-translational modification. Two non-identical subunits are generated from the proenzyme in this reaction, and the pyruvate is formed at the N-terminus of the alpha chain, which is derived from the carboxyl end of the proenzyme. The autoendoproteolytic cleavage occurs by a canonical serine protease mechanism, in which the side chain hydroxyl group of the serine supplies its oxygen atom to form the C-terminus of the beta chain, while the remainder of the serine residue undergoes an oxidative deamination to produce ammonia and the pyruvoyl prosthetic group on the alpha chain. During this reaction, the Ser that is part of the protease active site of the proenzyme becomes the pyruvoyl prosthetic group, which constitutes an essential element of the active site of the mature decarboxylase.

The protein resides in the endoplasmic reticulum membrane. The enzyme catalyses a 1,2-diacyl-sn-glycero-3-phospho-L-serine + H(+) = a 1,2-diacyl-sn-glycero-3-phosphoethanolamine + CO2. The protein operates within phospholipid metabolism; phosphatidylethanolamine biosynthesis; phosphatidylethanolamine from CDP-diacylglycerol: step 2/2. Catalyzes the formation of phosphatidylethanolamine (PtdEtn) from phosphatidylserine (PtdSer). Plays a central role in phospholipid metabolism and in the interorganelle trafficking of phosphatidylserine. In Plasmodium falciparum, this protein is Phosphatidylserine decarboxylase proenzyme.